The sequence spans 301 residues: ATP synthase F(0) complex subunit B1, mitochondrial (301 aa).

The transit peptide at 1-21 (MSLSRLSSPQTFSRVFIVARG) directs the protein to the mitochondrion.

The protein belongs to the eukaryotic ATPase B chain family. In terms of assembly, subunit of the F-type ATPase which has 2 components, CF(1) - the catalytic core - and CF(0) - the membrane proton channel.

The protein localises to the mitochondrion. The protein resides in the mitochondrion inner membrane. In terms of biological role, mitochondrial membrane ATP synthase (F(1)F(0) ATP synthase or Complex V) produces ATP from ADP in the presence of a proton gradient across the membrane which is generated by electron transport complexes of the respiratory chain. F-type ATPases consist of two structural domains, F(1) - containing the extramembraneous catalytic core, and F(0) - containing the membrane proton channel, linked together by a central stalk and a peripheral stalk. During catalysis, ATP synthesis in the catalytic domain of F(1) is coupled via a rotary mechanism of the central stalk subunits to proton translocation. Part of the complex F(0) domain and the peripheric stalk, which acts as a stator to hold the subunits of the catalytic subcomplexes relative to the rotary elements. Plays a role in germline development. The chain is ATP synthase F(0) complex subunit B1, mitochondrial from Caenorhabditis elegans.